Consider the following 200-residue polypeptide: Pyrrolidone-carboxylate peptidase (200 aa).

Catalysis depends on residues Glu-78, Cys-141, and His-165.

This sequence belongs to the peptidase C15 family. In terms of assembly, homotetramer.

The protein localises to the cytoplasm. It catalyses the reaction Release of an N-terminal pyroglutamyl group from a polypeptide, the second amino acid generally not being Pro.. Its function is as follows. Removes 5-oxoproline from various penultimate amino acid residues except L-proline. This Lactobacillus helveticus (strain DPC 4571) protein is Pyrrolidone-carboxylate peptidase.